The chain runs to 157 residues: Pyruvoyl-dependent arginine decarboxylase 1 (157 aa).

Ser-41 carries the post-translational modification Pyruvic acid (Ser).

It belongs to the PdaD family. Pyruvate is required as a cofactor.

The catalysed reaction is L-arginine + H(+) = agmatine + CO2. The chain is Pyruvoyl-dependent arginine decarboxylase 1 (pdaD1) from Archaeoglobus fulgidus (strain ATCC 49558 / DSM 4304 / JCM 9628 / NBRC 100126 / VC-16).